The chain runs to 433 residues: uncharacterized protein (433 aa).

The TRAM domain maps to 1–59 (MGEEYEVEIGPVAHGGHCIARTSEGQVLFVRHALPGERVLARVTEGEEGARYLRADAVE). Residues cysteine 72, cysteine 80, cysteine 83, and cysteine 168 each contribute to the [4Fe-4S] cluster site. The S-adenosyl-L-methionine site is built by glutamine 262, tyrosine 291, glutamate 315, and aspartate 359. The active-site Nucleophile is cysteine 386.

Belongs to the class I-like SAM-binding methyltransferase superfamily. RNA M5U methyltransferase family.

This is an uncharacterized protein from Streptomyces avermitilis (strain ATCC 31267 / DSM 46492 / JCM 5070 / NBRC 14893 / NCIMB 12804 / NRRL 8165 / MA-4680).